A 274-amino-acid chain; its full sequence is Copper chaperone for superoxide dismutase (274 aa).

The region spanning 11-74 (ACMLEFAVQM…LLEDTGRQAV (64 aa)) is the HMA domain. 2 residues coordinate Cu cation: Cys-22 and Cys-25. Lys-76 is covalently cross-linked (Glycyl lysine isopeptide (Lys-Gly) (interchain with G-Cter in ubiquitin)). Positions 88-234 (AAVAILGGSG…LACGIIARSA (147 aa)) are superoxide dismutase-like. Cys-141 and Cys-227 form a disulfide bridge. 4 residues coordinate Zn(2+): His-147, His-155, His-164, and Asp-167. Residues Lys-189, Lys-216, and Lys-241 each participate in a glycyl lysine isopeptide (Lys-Gly) (interchain with G-Cter in ubiquitin) cross-link. Residues Cys-244 and Cys-246 each coordinate Cu cation.

It in the C-terminal section; belongs to the Cu-Zn superoxide dismutase family. Homodimer, and heterodimer with SOD1. Interacts with COMMD1. Interacts with XIAP/BIRC4. Interacts with SLC31A1(via C-terminal domain); this interaction is Cu(1+)-mediated. The heterodimer CCS:SOD1 interacts with SLC31A1; this heterotrimer is Cu(1+)-mediated and its maintenance is regulated through SOD1 activation. The cofactor is Cu(2+). Zn(2+) is required as a cofactor. In terms of processing, ubiquitinion by XIAP/BIRC4 leads to enhancement of its chaperone activity toward its physiologic target, SOD1, rather than proteasomal degradation. XIAP/BIRC4 preferentially ubiquitinates at Lys-241.

It localises to the cytoplasm. Its function is as follows. Delivers copper to copper zinc superoxide dismutase (SOD1). The polypeptide is Copper chaperone for superoxide dismutase (Sus scrofa (Pig)).